Here is a 924-residue protein sequence, read N- to C-terminus: Protein translocase subunit SecA (924 aa).

ATP contacts are provided by residues Gln87, 105–109, and Asp517; that span reads GEGKT. The interval 886 to 906 is disordered; sequence VPAADRDPNDPSTWGKVGRNE. Residues Cys908, Cys910, Cys919, and His920 each coordinate Zn(2+).

Belongs to the SecA family. As to quaternary structure, monomer and homodimer. Part of the essential Sec protein translocation apparatus which comprises SecA, SecYEG and auxiliary proteins SecDF-YajC and YidC. Requires Zn(2+) as cofactor.

Its subcellular location is the cell inner membrane. It localises to the cytoplasm. The enzyme catalyses ATP + H2O + cellular proteinSide 1 = ADP + phosphate + cellular proteinSide 2.. Its function is as follows. Part of the Sec protein translocase complex. Interacts with the SecYEG preprotein conducting channel. Has a central role in coupling the hydrolysis of ATP to the transfer of proteins into and across the cell membrane, serving both as a receptor for the preprotein-SecB complex and as an ATP-driven molecular motor driving the stepwise translocation of polypeptide chains across the membrane. The chain is Protein translocase subunit SecA from Azorhizobium caulinodans (strain ATCC 43989 / DSM 5975 / JCM 20966 / LMG 6465 / NBRC 14845 / NCIMB 13405 / ORS 571).